We begin with the raw amino-acid sequence, 580 residues long: Putative multidrug export ATP-binding/permease protein YgaD (580 aa).

Over 1–17 the chain is Cytoplasmic; sequence MGVMKRYMQFVKPYKKQ. A helical transmembrane segment spans residues 18 to 38; it reads IFVTVLIGIVKFSIPLALPLL. One can recognise an ABC transmembrane type-1 domain in the interval 19 to 307; that stretch reads FVTVLIGIVK…LINSSTTLTQ (289 aa). Over 39–57 the chain is Extracellular; sequence LKYVVDDIIQGGGTASDKT. The chain crosses the membrane as a helical span at residues 58 to 78; it reads TSLFTIMAIMFALFLILRPPV. The Cytoplasmic segment spans residues 79–135; that stretch reads EYYRQYFAQWTASKVLYDIRAKLFDHIQKLSLRFYANTRTGEVISRVINDVEQTKDF. A helical membrane pass occupies residues 136 to 156; the sequence is VITGLMNIWLDMLTILIVISI. The Extracellular segment spans residues 157–163; the sequence is MLTLDVK. The helical transmembrane segment at 164–184 threads the bilayer; sequence LTLISIVLFPLYGISVKYFYG. Residues 185–243 are Cytoplasmic-facing; the sequence is RLRKLTRERSQALAQVQGHLHERIQGMPVIRSFAIEDHEQAQFNEKNGHFLDKAIRHTN. Residues 244 to 263 traverse the membrane as a helical segment; it reads WNAKTFAVVNTITDLAPLIV. The Extracellular segment spans residues 264 to 268; sequence IACAG. The chain crosses the membrane as a helical span at residues 269–288; that stretch reads YFVINGPLTVGTMVAFVGYI. Residues 289 to 580 lie on the Cytoplasmic side of the membrane; the sequence is DRMYNPVRRL…KHLFTIQNLN (292 aa). One can recognise an ABC transporter domain in the interval 341–576; it reads VEFQNVSFQY…ESQYKHLFTI (236 aa). 375–382 is an ATP binding site; it reads GMSGGGKS.

It belongs to the ABC transporter superfamily. In terms of assembly, homodimer.

It is found in the cell membrane. Functionally, may be involved in multidrug export. Transmembrane domains (TMD) form a pore in the cell membrane and the ATP-binding domain (NBD) is responsible for energy generation. The sequence is that of Putative multidrug export ATP-binding/permease protein YgaD (ygaD) from Bacillus subtilis (strain 168).